The chain runs to 65 residues: UPF0337 protein PA4738 (65 aa).

Belongs to the UPF0337 (CsbD) family.

In Pseudomonas aeruginosa (strain ATCC 15692 / DSM 22644 / CIP 104116 / JCM 14847 / LMG 12228 / 1C / PRS 101 / PAO1), this protein is UPF0337 protein PA4738.